We begin with the raw amino-acid sequence, 308 residues long: Aspartate carbamoyltransferase catalytic subunit (308 aa).

Positions 49 and 50 each coordinate carbamoyl phosphate. Lys77 provides a ligand contact to L-aspartate. The carbamoyl phosphate site is built by Arg99, His127, and Gln130. L-aspartate-binding residues include Arg160 and Arg211. Residues Ala252 and Pro253 each contribute to the carbamoyl phosphate site.

This sequence belongs to the aspartate/ornithine carbamoyltransferase superfamily. ATCase family. Heterododecamer (2C3:3R2) of six catalytic PyrB chains organized as two trimers (C3), and six regulatory PyrI chains organized as three dimers (R2).

The enzyme catalyses carbamoyl phosphate + L-aspartate = N-carbamoyl-L-aspartate + phosphate + H(+). The protein operates within pyrimidine metabolism; UMP biosynthesis via de novo pathway; (S)-dihydroorotate from bicarbonate: step 2/3. Catalyzes the condensation of carbamoyl phosphate and aspartate to form carbamoyl aspartate and inorganic phosphate, the committed step in the de novo pyrimidine nucleotide biosynthesis pathway. In Bacillus caldolyticus, this protein is Aspartate carbamoyltransferase catalytic subunit.